The sequence spans 60 residues: Large ribosomal subunit protein bL32 (60 aa).

A disordered region spans residues 1–60 (MAVQQNKKTPSKRGMHRSHDFLVAPQLSVEQTTGETHMRHHISPNGFYRGRKVLKTKNDE). The span at 49–60 (RGRKVLKTKNDE) shows a compositional bias: basic residues.

It belongs to the bacterial ribosomal protein bL32 family.

In Herminiimonas arsenicoxydans, this protein is Large ribosomal subunit protein bL32.